The primary structure comprises 582 residues: Spermatogenesis-associated protein 7 homolog (582 aa).

Disordered regions lie at residues 167 to 192 (LMSGTQKHASTSPSRHSGCGHGCDRR) and 251 to 289 (RKDFSDQRMEAETQTELSSFNSELGTAEKTSSKDSEVNI). Composition is skewed to polar residues over residues 169-181 (SGTQKHASTSPSR) and 262-274 (ETQTELSSFNSEL).

As to quaternary structure, found in a complex with CFAP410, NEK1 and SPATA7. Interacts with NEK1. Interacts with RPGRIP1. Interacts with RPGR. Interacts with NPHP4. Interacts with NPHP1. Interacts with AHI1. As to expression, expressed in the retina (at protein level). Expressed in the choroid region and retinal pigment endothelium, within the photoreceptor layer (at protein level).

It is found in the cytoplasm. The protein resides in the cytoskeleton. It localises to the cilium axoneme. The protein localises to the cilium basal body. Its subcellular location is the cell projection. It is found in the cilium. The protein resides in the photoreceptor outer segment. Its function is as follows. Involved in the maintenance of both rod and cone photoreceptor cells. Required for photoreceptor-specific localization of proximal connecting cilium (CC) proteins RPGR, AHI1, NPHP1, NPHP4, and RPGRIP1 at the distal CC, a photoreceptor-specific extension of the primary cilium transition zone. Maintenance of protein localization at the photoreceptor-specific distal CC is essential for normal microtubule stability and to prevent photoreceptor degeneration. In Mus musculus (Mouse), this protein is Spermatogenesis-associated protein 7 homolog (Spata7).